Consider the following 458-residue polypeptide: Smoothelin-like protein 2 (458 aa).

Residues 24 to 88 (LEGAVRALHE…RQVESLGLTT (65 aa)) adopt a coiled-coil conformation. Disordered regions lie at residues 87 to 111 (TTGLAPAPGTPSPPPAPGVPNRAPR), 123 to 142 (FSLSGRSQSLDHHDEASELE), and 151 to 312 (IIEN…GAQA). The segment covering 94–104 (PGTPSPPPAPG) has biased composition (pro residues). T96 carries the phosphothreonine modification. 3 positions are modified to phosphoserine: S98, S126, and S131. Residues 131 to 142 (SLDHHDEASELE) are compositionally biased toward basic and acidic residues. 2 stretches are compositionally biased toward low complexity: residues 158–167 (PGADPGDGPP) and 209–220 (TSATALSPTSAA). Over residues 225–244 (LSSSPSEATTPWTPSPSEKN) the composition is skewed to polar residues. Residues 245–254 (SSLPRSLSSS) are compositionally biased toward low complexity. Phosphoserine occurs at positions 252, 254, and 267. A compositionally biased stretch (pro residues) spans 270 to 283 (LVTPPQSPPSPQPP). T272 is subject to Phosphothreonine. Phosphoserine is present on S276. Over residues 290 to 299 (RPGERRRELV) the composition is skewed to basic and acidic residues. The segment covering 300-310 (RSQTLPRTSGA) has biased composition (polar residues). At S341 the chain carries Phosphoserine. Residues 348–455 (SSIKQILLEW…YVQSLYNHLR (108 aa)) enclose the Calponin-homology (CH) domain.

The protein belongs to the smoothelin family.

The sequence is that of Smoothelin-like protein 2 (SMTNL2) from Bos taurus (Bovine).